The chain runs to 564 residues: Laccase-22 (564 aa).

Residues 1–25 (MAVLPESRRLSLLLMAACFLLQALS) form the signal peptide. Plastocyanin-like domains lie at 36 to 152 (NVVM…PKLG) and 162 to 314 (KEAV…YANT). Asn41 and Asn82 each carry an N-linked (GlcNAc...) asparagine glycan. Cu cation contacts are provided by His86 and His88. A glycan (N-linked (GlcNAc...) asparagine) is linked at Asn118. His131 and His133 together coordinate Cu cation. Residues Asn191, Asn302, Asn331, Asn379, Asn389, Asn424, Asn437, and Asn447 are each glycosylated (N-linked (GlcNAc...) asparagine). The Plastocyanin-like 3 domain occupies 414–548 (DFPATPLHKF…KMAFVVDNGK (135 aa)). Cu cation is bound by residues His465, His468, His470, His527, Cys528, His529, and His533.

Belongs to the multicopper oxidase family. It depends on Cu cation as a cofactor.

Its subcellular location is the secreted. The protein resides in the extracellular space. It localises to the apoplast. It catalyses the reaction 4 hydroquinone + O2 = 4 benzosemiquinone + 2 H2O. Lignin degradation and detoxification of lignin-derived products. The sequence is that of Laccase-22 (LAC22) from Oryza sativa subsp. japonica (Rice).